A 63-amino-acid chain; its full sequence is Sec-independent protein translocase protein TatA (63 aa).

A helical transmembrane segment spans residues 1–21 (MGSLSMWHWLIVLVIVLLLFG). Residues 43-63 (MTDEDAPETAKTVDHKADETK) are disordered. The span at 53 to 63 (KTVDHKADETK) shows a compositional bias: basic and acidic residues.

It belongs to the TatA/E family. As to quaternary structure, the Tat system comprises two distinct complexes: a TatABC complex, containing multiple copies of TatA, TatB and TatC subunits, and a separate TatA complex, containing only TatA subunits. Substrates initially bind to the TatABC complex, which probably triggers association of the separate TatA complex to form the active translocon.

The protein localises to the cell inner membrane. Functionally, part of the twin-arginine translocation (Tat) system that transports large folded proteins containing a characteristic twin-arginine motif in their signal peptide across membranes. TatA could form the protein-conducting channel of the Tat system. In Rhizobium etli (strain ATCC 51251 / DSM 11541 / JCM 21823 / NBRC 15573 / CFN 42), this protein is Sec-independent protein translocase protein TatA.